The sequence spans 290 residues: 4-hydroxybenzoate octaprenyltransferase (290 aa).

8 helical membrane passes run 40–60 (IAGA…GVVI), 99–119 (LALF…LNEL), 120–140 (TFWL…TKRF), 142–162 (FMPQ…AFAA), 165–185 (GEVP…TVAY), 215–235 (LMIA…GHRL), 239–259 (WPWY…HSLI), and 267–287 (SFHA…GLYF).

This sequence belongs to the UbiA prenyltransferase family. Mg(2+) is required as a cofactor.

Its subcellular location is the cell inner membrane. It catalyses the reaction all-trans-octaprenyl diphosphate + 4-hydroxybenzoate = 4-hydroxy-3-(all-trans-octaprenyl)benzoate + diphosphate. It functions in the pathway cofactor biosynthesis; ubiquinone biosynthesis. Catalyzes the prenylation of para-hydroxybenzoate (PHB) with an all-trans polyprenyl group. Mediates the second step in the final reaction sequence of ubiquinone-8 (UQ-8) biosynthesis, which is the condensation of the polyisoprenoid side chain with PHB, generating the first membrane-bound Q intermediate 3-octaprenyl-4-hydroxybenzoate. The polypeptide is 4-hydroxybenzoate octaprenyltransferase (Alcanivorax borkumensis (strain ATCC 700651 / DSM 11573 / NCIMB 13689 / SK2)).